The following is a 163-amino-acid chain: Photosystem II extrinsic protein V (163 aa).

An N-terminal signal peptide occupies residues 1–26; that stretch reads MLRKLILITVATVFFACQLLVNPVSA. Residues Cys-63, Cys-66, His-67, and His-118 each contribute to the heme c site.

This sequence belongs to the cytochrome c family. PsbV subfamily. PSII is composed of 1 copy each of membrane proteins PsbA, PsbB, PsbC, PsbD, PsbE, PsbF, PsbH, PsbI, PsbJ, PsbK, PsbL, PsbM, PsbT, PsbX, PsbY, PsbZ, Psb30/Ycf12, peripheral proteins PsbO, CyanoQ (PsbQ), PsbU, PsbV and a large number of cofactors. It forms dimeric complexes. Heme c is required as a cofactor.

It localises to the cellular thylakoid membrane. Its function is as follows. One of the extrinsic, lumenal subunits of photosystem II (PSII). PSII is a light-driven water plastoquinone oxidoreductase, using light energy to abstract electrons from H(2)O, generating a proton gradient subsequently used for ATP formation. The extrinsic proteins stabilize the structure of photosystem II oxygen-evolving complex (OEC), the ion environment of oxygen evolution and protect the OEC against heat-induced inactivation. Low-potential cytochrome c that plays a role in the OEC of PSII. The polypeptide is Photosystem II extrinsic protein V (Aphanothece halophytica).